The following is a 580-amino-acid chain: PX domain-containing protein kinase-like protein (580 aa).

Positions 14–126 (LDDTVPLTAA…KFLDPNNYSA (113 aa)) constitute a PX domain. Positions 88-481 (FIAERQKGLQ…VENSEEQPVK (394 aa)) constitute a Protein kinase domain. Positions 433 to 551 (EQKQIHQHRR…LPQAVNGVNR (119 aa)) are disordered. Composition is skewed to basic residues over residues 437 to 448 (IHQHRRLTRAQS) and 457 to 469 (KRRK…KSKR). Positions 483–514 (SNANNSAGSGASSPLTSPSSPTPPSTAGLSSA) are enriched in low complexity. The span at 515-531 (LPPPPPPPPPPPPPAGP) shows a compositional bias: pro residues. The 20-residue stretch at 549-568 (VNRGALLSSIQNFQKGTLRK) folds into the WH2 domain.

This sequence belongs to the protein kinase superfamily.

It localises to the cytoplasm. Its subcellular location is the cell membrane. In terms of biological role, binds to and modulates brain Na,K-ATPase subunits ATP1B1 and ATP1B3 and may thereby participate in the regulation of electrical excitability and synaptic transmission. May not display kinase activity. This is PX domain-containing protein kinase-like protein from Rattus norvegicus (Rat).